The following is a 143-amino-acid chain: Late embryogenesis abundant protein 1 (143 aa).

Positions 1–17 (MSSQQNQNRQGEQQEQG) are enriched in low complexity. A disordered region spans residues 1-143 (MSSQQNQNRQ…QAGEKVKGRD (143 aa)). Tandem repeats lie at residues 47–57 (KTAEFRDSAGE), 69–79 (KGQEFKERAGE), 80–90 (KAEETKQRAGE), and 91–101 (KMDETKQRAGE). Basic and acidic residues-rich tracts occupy residues 47 to 60 (KTAEFRDSAGETIR) and 69 to 143 (KGQE…KGRD). The tract at residues 47–101 (KTAEFRDSAGETIRDLTGQAQEKGQEFKERAGEKAEETKQRAGEKMDETKQRAGE) is 4 X 11 AA approximate repeats.

It belongs to the LEA type 4 family.

Functionally, may be involved in defense against water stress. The chain is Late embryogenesis abundant protein 1 from Aphelenchoides avenae (Mycophagous nematode worm).